Consider the following 252-residue polypeptide: Indole-3-glycerol phosphate synthase (252 aa).

It belongs to the TrpC family.

The catalysed reaction is 1-(2-carboxyphenylamino)-1-deoxy-D-ribulose 5-phosphate + H(+) = (1S,2R)-1-C-(indol-3-yl)glycerol 3-phosphate + CO2 + H2O. The protein operates within amino-acid biosynthesis; L-tryptophan biosynthesis; L-tryptophan from chorismate: step 4/5. In Listeria welshimeri serovar 6b (strain ATCC 35897 / DSM 20650 / CCUG 15529 / CIP 8149 / NCTC 11857 / SLCC 5334 / V8), this protein is Indole-3-glycerol phosphate synthase.